The following is a 495-amino-acid chain: UDP-glycosyltransferase 73C10 (495 aa).

Residue His24 is the Proton acceptor of the active site. His24 contacts an anthocyanidin. Asp129 acts as the Charge relay in catalysis. Gln358, His373, Trp376, Asn377, Ser378, and Glu381 together coordinate UDP-alpha-D-glucose. Residue Gly396 coordinates an anthocyanidin. Residues Asp397 and Gln398 each coordinate UDP-alpha-D-glucose.

It belongs to the UDP-glycosyltransferase family.

It catalyses the reaction oleanolate + UDP-alpha-D-glucose = oleanolate 3-O-beta-D-glucoside + UDP + H(+). In terms of biological role, catalyzes the transfer of a glucose (Glc) moiety from UDP-Glc to the C-3 position of the oleanane sapogenins oleanolate and hederagenin, and to the C-28 carboxylic group of the lupane sapogenin betulinate. The monoglucosylated hederagenin 3-O-beta-D-glucoside is a feeding deterrent of the yellow-striped flea beetle (Phyllotreta nemorum). This is UDP-glycosyltransferase 73C10 from Barbarea vulgaris (Yellow rocket).